Reading from the N-terminus, the 23-residue chain is uncharacterized protein (23 aa).

The protein resides in the plastid. It is found in the chloroplast. This is an uncharacterized protein from Zea mays (Maize).